Here is a 710-residue protein sequence, read N- to C-terminus: Lactoperoxidase (710 aa).

A signal peptide spans 1 to 22; the sequence is MKVLLRLPALLASLTLLQMAAS. Residues 23–98 constitute a propeptide that is removed on maturation; sequence TRNATRTATI…WEQSLKRLRR (76 aa). 3 N-linked (GlcNAc...) asparagine glycosylation sites follow: N25, N104, and N131. The cysteines at positions 130 and 143 are disulfide-linked. D223 contributes to the heme b binding site. The active-site Proton acceptor is H224. D225 is a Ca(2+) binding site. An N-linked (GlcNAc...) asparagine glycan is attached at N238. Disulfide bonds link C244–C254 and C248–C272. Positions 299, 301, 303, and 305 each coordinate Ca(2+). The residue at position 313 (S313) is a Phosphoserine. N320 carries N-linked (GlcNAc...) asparagine glycosylation. Residues C352 and C363 are joined by a disulfide bond. Positions 373 and 466 each coordinate heme b. 3'-nitrotyrosine is present on Y480. Disulfide bonds link C571-C628 and C669-C694.

This sequence belongs to the peroxidase family. XPO subfamily. Requires Ca(2+) as cofactor. Heme b is required as a cofactor. Expressed in the lacrimal gland with higher levels and 3-fold higher activity in adult females than males and secreted into tears (at protein level).

It is found in the secreted. The protein localises to the cytoplasm. It catalyses the reaction 2 a phenolic donor + H2O2 = 2 a phenolic radical donor + 2 H2O. The catalysed reaction is thiocyanate + H2O2 + H(+) = hypothiocyanous acid + H2O. It carries out the reaction iodide + H2O2 = hypoiodite + H2O. Functionally, heme-containing oxidoreductase which catalyzes the conversion of thiocyanate (SCN(-)) into antimicrobial agent hypothiocyanous acid (OSCN(-)) in the presence of hydrogen peroxide (H2O2). Also involved in the conversion of iodide (I(-)) into hypoiodite (IO(-)) in the presence of H2O2. Responsible for the inactivation of a wide range of micro-organisms and hence, important component of defense mechanism. May be implicated in airway host defense against infection. May contribute to maintaining an appropriate H2O2 cellular level, therefore protecting cells from H2O2-caused injuries and inflammation. This chain is Lactoperoxidase (LPO), found in Mesocricetus auratus (Golden hamster).